The following is a 419-amino-acid chain: Erythromycin esterase type II (419 aa).

This enzyme confers resistance to erythromycin through inactivation by hydrolyzing the lactone ring of the antibiotic. The protein is Erythromycin esterase type II (ereB) of Escherichia coli.